The sequence spans 233 residues: MPIFRLPREPAFPDPALAEPDGLLAVGGDLEPERLLTAYAEGIFPWFDAESPILWWSPDPRLVLDPAALHVPRSLQRTLRRGAYRVSADEAFERVIRRCAERDRPGQQGTWITGEMVDAYVRLHRLGVAHSFEAWEGDALAGGLYGVSLGAAFFGESMFADAPDASKVAFVRSVEWLRSAGVELVDCQVRTEHLVRFGAREIPRAEFLARLARALEQPTLRGRWQLGGAGPPS.

This sequence belongs to the L/F-transferase family.

The protein resides in the cytoplasm. The enzyme catalyses N-terminal L-lysyl-[protein] + L-leucyl-tRNA(Leu) = N-terminal L-leucyl-L-lysyl-[protein] + tRNA(Leu) + H(+). It carries out the reaction N-terminal L-arginyl-[protein] + L-leucyl-tRNA(Leu) = N-terminal L-leucyl-L-arginyl-[protein] + tRNA(Leu) + H(+). The catalysed reaction is L-phenylalanyl-tRNA(Phe) + an N-terminal L-alpha-aminoacyl-[protein] = an N-terminal L-phenylalanyl-L-alpha-aminoacyl-[protein] + tRNA(Phe). Its function is as follows. Functions in the N-end rule pathway of protein degradation where it conjugates Leu, Phe and, less efficiently, Met from aminoacyl-tRNAs to the N-termini of proteins containing an N-terminal arginine or lysine. In Anaeromyxobacter dehalogenans (strain 2CP-1 / ATCC BAA-258), this protein is Leucyl/phenylalanyl-tRNA--protein transferase.